The primary structure comprises 1095 residues: Inactive phospholipase C-like protein 1 (1095 aa).

Residues Met1 to Pro11 are compositionally biased toward basic and acidic residues. Residues Met1–Ser61 form a disordered region. A phosphoserine mark is found at Ser47 and Ser77. Residues Ser83–Val222 form an interaction with PPP1C region. The residue at position 93 (Thr93) is a Phosphothreonine; by PKA. The residue at position 95 (Ser95) is a Phosphoserine. A PH domain is found at Ser113–Ser223. In terms of domain architecture, PI-PLC X-box spans Gln398 to Lys542. The interval Lys543 to Arg567 is interaction with GABA A beta subunit. Position 556 is a phosphothreonine (Thr556). Ser569 carries the phosphoserine modification. Residues Leu585–Arg701 enclose the PI-PLC Y-box domain. The region spanning Arg701 to Ser830 is the C2 domain. Coiled coils occupy residues Leu894–Leu914 and Leu1034–Cys1059. Positions Lys1066–Leu1095 are disordered. Residues Ala1074–Leu1095 are compositionally biased toward basic and acidic residues. Phosphoserine is present on Ser1079.

In terms of assembly, interacts with PPP2CA. Interacts with Ins(1,4,5)P3, Ins(1,4,5,6)P4, GABARAP, GABA receptor beta subunits, GABA receptor gamma-2 subunits and PPP1C. May form a ternary complex with GABA receptor beta subunit and GABARAP. The formation of a ternary complex with GABA receptor beta subunit and GABARAP could be the key step for facilitating the association of GABARAP with the GABA receptor gamma-2 subunit and to allow it to be transported at the right destination. In terms of processing, phosphorylated by the catalytic subunit of PKA. Phosphorylation of Thr-93 resulted in dissociation of PPP1C from PRIP1. Expressed in a variety of fetal and adult organs including brain, lung and kidney. Its expression was greatly reduced in small and non-small cell lung carcinoma. Isoform 1 is predominantly expressed in brain.

The protein resides in the cytoplasm. Involved in an inositol phospholipid-based intracellular signaling cascade. Shows no PLC activity to phosphatidylinositol 4,5-bisphosphate and phosphatidylinositol. Component in the phospho-dependent endocytosis process of GABA A receptor. Regulates the turnover of receptors and thus contributes to the maintenance of GABA-mediated synaptic inhibition. Its aberrant expression could contribute to the genesis and progression of lung carcinoma. Acts as an inhibitor of PPP1C. This is Inactive phospholipase C-like protein 1 (PLCL1) from Homo sapiens (Human).